Consider the following 401-residue polypeptide: MKILVMNCGSSSLKYQLLDMDNGKVLAKGLAERIGINDSLLTHQVEGKDKIKIQKDMKNHKEAIQIVLEALVDKEIGILKDMKEIDAVGHRVVHGGEFFTDSVLIDDEVIKKLEACIDLAPLHNPANIEGIKACRQIMPGVPMVAVFDTAFHQTMPDYAYIYPIPYEYYEKYRIRRYGFHGTSHKYVSLRAAEILKRPIEELKIITCHLGNGSSIAAVKGGKSIDTSMGFTPLEGLAMGTRSGNVDPSIITFLMEKEGLTAEQVIDILNKKSGVYGISGISNDFRDIENAAFKEGHKRAMLALKVFAYRVKKTIGSYTAAMGGVDVIVFTAGVGENGPEMREFILEDLEFLGFKLDKEKNKVRGKEEIISTEDSKVKVMVIPTNEEYMIAKDTEKLVKGLK.

Position 7 (Asn-7) interacts with Mg(2+). Lys-14 is an ATP binding site. Arg-91 provides a ligand contact to substrate. The active-site Proton donor/acceptor is Asp-148. ATP contacts are provided by residues 208 to 212 (HLGNG), 283 to 285 (DFR), and 332 to 336 (GVGEN). Glu-385 contacts Mg(2+).

Belongs to the acetokinase family. In terms of assembly, homodimer. The cofactor is Mg(2+). Requires Mn(2+) as cofactor.

It localises to the cytoplasm. It carries out the reaction acetate + ATP = acetyl phosphate + ADP. It functions in the pathway metabolic intermediate biosynthesis; acetyl-CoA biosynthesis; acetyl-CoA from acetate: step 1/2. Catalyzes the formation of acetyl phosphate from acetate and ATP. Can also catalyze the reverse reaction. The polypeptide is Acetate kinase (Thermoanaerobacter pseudethanolicus (strain ATCC 33223 / 39E) (Clostridium thermohydrosulfuricum)).